Reading from the N-terminus, the 295-residue chain is Putative NADH-ubiquinone oxidoreductase MJ0520 (295 aa).

Transmembrane regions (helical) follow at residues 8–28, 69–89, 129–149, 163–183, 199–219, 220–240, 243–263, and 273–293; these read LIGAINLTIHAFLVGSLLLGL, LYIFVALLDIAIWLAALIIAI, VFSAAAEVPLFAVVAAIYLTT, IHGSLLFKMPICAFAFFILLV, IVSGYMTEHYGLLGAIIYIAE, AIAYFVLLWLFIAVFIGPLVI, PVLTLAVMVVMTVILAFVNGL, and VMLQMTIAGLVLCDVLYRLIV.

It belongs to the complex I subunit 1 family.

The protein resides in the cell membrane. It carries out the reaction a ubiquinone + NADH + 5 H(+)(in) = a ubiquinol + NAD(+) + 4 H(+)(out). This Methanocaldococcus jannaschii (strain ATCC 43067 / DSM 2661 / JAL-1 / JCM 10045 / NBRC 100440) (Methanococcus jannaschii) protein is Putative NADH-ubiquinone oxidoreductase MJ0520.